We begin with the raw amino-acid sequence, 58 residues long: Small ribosomal subunit protein bS21B (58 aa).

Belongs to the bacterial ribosomal protein bS21 family.

This Trichormus variabilis (strain ATCC 29413 / PCC 7937) (Anabaena variabilis) protein is Small ribosomal subunit protein bS21B.